Consider the following 469-residue polypeptide: ATP synthase subunit beta (469 aa).

ATP is bound at residue 156 to 163; the sequence is GGAGVGKT.

Belongs to the ATPase alpha/beta chains family. In terms of assembly, F-type ATPases have 2 components, CF(1) - the catalytic core - and CF(0) - the membrane proton channel. CF(1) has five subunits: alpha(3), beta(3), gamma(1), delta(1), epsilon(1). CF(0) has three main subunits: a(1), b(2) and c(9-12). The alpha and beta chains form an alternating ring which encloses part of the gamma chain. CF(1) is attached to CF(0) by a central stalk formed by the gamma and epsilon chains, while a peripheral stalk is formed by the delta and b chains.

It localises to the cell membrane. The enzyme catalyses ATP + H2O + 4 H(+)(in) = ADP + phosphate + 5 H(+)(out). Functionally, produces ATP from ADP in the presence of a proton gradient across the membrane. The catalytic sites are hosted primarily by the beta subunits. In Bacillus anthracis (strain CDC 684 / NRRL 3495), this protein is ATP synthase subunit beta.